The chain runs to 396 residues: Elongation factor Tu (396 aa).

The tr-type G domain maps to 10–206 (KPHVNIGTIG…AVDSYIPEPV (197 aa)). Residues 19 to 26 (GHVDHGKT) form a G1 region. 19-26 (GHVDHGKT) contributes to the GTP binding site. Residue T26 participates in Mg(2+) binding. The tract at residues 60–64 (GITIA) is G2. The interval 81-84 (DCPG) is G3. GTP contacts are provided by residues 81–85 (DCPGH) and 136–139 (NKAD). Residues 136 to 139 (NKAD) are G4. The interval 174 to 176 (SAL) is G5.

This sequence belongs to the TRAFAC class translation factor GTPase superfamily. Classic translation factor GTPase family. EF-Tu/EF-1A subfamily. Monomer.

The protein localises to the cytoplasm. The enzyme catalyses GTP + H2O = GDP + phosphate + H(+). Its function is as follows. GTP hydrolase that promotes the GTP-dependent binding of aminoacyl-tRNA to the A-site of ribosomes during protein biosynthesis. The polypeptide is Elongation factor Tu (Geotalea uraniireducens (strain Rf4) (Geobacter uraniireducens)).